Consider the following 303-residue polypeptide: tRNA dimethylallyltransferase (303 aa).

Gly-16 to Ser-23 lines the ATP pocket. A substrate-binding site is contributed by Thr-18 to Ser-23. The segment at Asp-41–Gln-44 is interaction with substrate tRNA. Residues Ala-141 to Pro-161 form a disordered region. The tract at residues Gln-165–Arg-169 is interaction with substrate tRNA.

Belongs to the IPP transferase family. In terms of assembly, monomer. Requires Mg(2+) as cofactor.

The enzyme catalyses adenosine(37) in tRNA + dimethylallyl diphosphate = N(6)-dimethylallyladenosine(37) in tRNA + diphosphate. Catalyzes the transfer of a dimethylallyl group onto the adenine at position 37 in tRNAs that read codons beginning with uridine, leading to the formation of N6-(dimethylallyl)adenosine (i(6)A). In Rhizobium meliloti (strain 1021) (Ensifer meliloti), this protein is tRNA dimethylallyltransferase.